The chain runs to 465 residues: VGFKAGVKDYKLTYYTPDYETKDTDILAAFRVTPQPGVPPEEAGAAVAAESSTGTWTTVWTDGLTSLDRYKGRCYHIEPVAGEENQYIAYVAYPLDLFEEGSVTNMFTSIVGNVFGFKALRALRLEDLRIPPAYSKTFQGPPHGIQVERDKLNKYGRPLLGCTIKPKLGLSAKNYGRAVYECLRGGLDFTKDDENVNSQPFMRWRDRFLFCAEALYKAQAETGEIKGHYLNATAGTCEEMIKRAVFARELGVPIVMHDYLTGGFTANTSLAHYCRDNGLLLHIHRAMHAVIDRQKNHGMHFRVLAKALRLSGGDHIHAGTVVGKLEGERDITLGFVDLLRDDFIEKDRSRGIYFTQDWVSLPGVIPVASGGIHVWHMPALTEIFGDDSVLQFGGGTLGHPWGNAPGAVANRVALEACVKARNEGRDLAREGNEIIREASKWSPELAAACEVWKEIKFEFPAMDTL.

Position 4 is an N6,N6,N6-trimethyllysine (lysine 4). Substrate contacts are provided by asparagine 113 and threonine 163. Lysine 165 acts as the Proton acceptor in catalysis. Lysine 167 contributes to the substrate binding site. Lysine 191, aspartate 193, and glutamate 194 together coordinate Mg(2+). Lysine 191 is subject to N6-carboxylysine. Histidine 284 serves as the catalytic Proton acceptor. Positions 285, 317, and 369 each coordinate substrate.

This sequence belongs to the RuBisCO large chain family. Type I subfamily. As to quaternary structure, heterohexadecamer of 8 large chains and 8 small chains; disulfide-linked. The disulfide link is formed within the large subunit homodimers. It depends on Mg(2+) as a cofactor. Post-translationally, the disulfide bond which can form in the large chain dimeric partners within the hexadecamer appears to be associated with oxidative stress and protein turnover.

Its subcellular location is the plastid. The protein localises to the chloroplast. It carries out the reaction 2 (2R)-3-phosphoglycerate + 2 H(+) = D-ribulose 1,5-bisphosphate + CO2 + H2O. The enzyme catalyses D-ribulose 1,5-bisphosphate + O2 = 2-phosphoglycolate + (2R)-3-phosphoglycerate + 2 H(+). Its function is as follows. RuBisCO catalyzes two reactions: the carboxylation of D-ribulose 1,5-bisphosphate, the primary event in carbon dioxide fixation, as well as the oxidative fragmentation of the pentose substrate in the photorespiration process. Both reactions occur simultaneously and in competition at the same active site. In Humiria balsamifera (Tauroniro), this protein is Ribulose bisphosphate carboxylase large chain.